We begin with the raw amino-acid sequence, 370 residues long: Phospho-N-acetylmuramoyl-pentapeptide-transferase (370 aa).

The next 10 helical transmembrane spans lie at 3 to 23, 54 to 74, 79 to 99, 118 to 138, 161 to 181, 197 to 217, 238 to 258, 262 to 282, 290 to 310, and 341 to 361; these read QIII…PVLI, GLAI…YGLL, AFTA…AVGF, AKLI…LRFP, LAVG…YILI, LAAG…FWQF, LAVL…WNAA, IFMG…ISVT, IIIG…IVVF, and FWLL…GDWL.

Belongs to the glycosyltransferase 4 family. MraY subfamily. Mg(2+) is required as a cofactor.

Its subcellular location is the cell membrane. The catalysed reaction is UDP-N-acetyl-alpha-D-muramoyl-L-alanyl-gamma-D-glutamyl-meso-2,6-diaminopimeloyl-D-alanyl-D-alanine + di-trans,octa-cis-undecaprenyl phosphate = di-trans,octa-cis-undecaprenyl diphospho-N-acetyl-alpha-D-muramoyl-L-alanyl-D-glutamyl-meso-2,6-diaminopimeloyl-D-alanyl-D-alanine + UMP. The protein operates within cell wall biogenesis; peptidoglycan biosynthesis. Catalyzes the initial step of the lipid cycle reactions in the biosynthesis of the cell wall peptidoglycan: transfers peptidoglycan precursor phospho-MurNAc-pentapeptide from UDP-MurNAc-pentapeptide onto the lipid carrier undecaprenyl phosphate, yielding undecaprenyl-pyrophosphoryl-MurNAc-pentapeptide, known as lipid I. This Corynebacterium aurimucosum (strain ATCC 700975 / DSM 44827 / CIP 107346 / CN-1) (Corynebacterium nigricans) protein is Phospho-N-acetylmuramoyl-pentapeptide-transferase.